A 559-amino-acid polypeptide reads, in one-letter code: TBC1 domain family member 24 (559 aa).

Residues lysine 36, arginine 40, lysine 238, arginine 242, and 293-297 (RLFSR) each bind a 1,2-diacyl-sn-glycero-3-phospho-(1D-myo-inositol). One can recognise a Rab-GAP TBC domain in the interval 47–262 (SHALRGKVYQ…KVRAGQPLES (216 aa)). Residues 343–554 (EIVSVREMRD…IAAVEAWGFQ (212 aa)) form the TLDc domain. Phosphoserine occurs at positions 473 and 480.

Interacts with ARF6. As to expression, highest expression in brain.

Its subcellular location is the cell membrane. It localises to the cytoplasm. The protein resides in the cytoplasmic vesicle membrane. It is found in the presynapse. Its function is as follows. May act as a GTPase-activating protein for Rab family protein(s). Involved in neuronal projections development, probably through a negative modulation of ARF6 function. Involved in the regulation of synaptic vesicle trafficking. The chain is TBC1 domain family member 24 (TBC1D24) from Homo sapiens (Human).